The chain runs to 307 residues: Ribosomal RNA small subunit methyltransferase H (307 aa).

S-adenosyl-L-methionine is bound by residues 31-33, aspartate 51, tyrosine 83, aspartate 97, and glutamine 104; that span reads GGH.

The protein belongs to the methyltransferase superfamily. RsmH family.

Its subcellular location is the cytoplasm. It catalyses the reaction cytidine(1402) in 16S rRNA + S-adenosyl-L-methionine = N(4)-methylcytidine(1402) in 16S rRNA + S-adenosyl-L-homocysteine + H(+). In terms of biological role, specifically methylates the N4 position of cytidine in position 1402 (C1402) of 16S rRNA. The chain is Ribosomal RNA small subunit methyltransferase H from Buchnera aphidicola subsp. Cinara cedri (strain Cc).